We begin with the raw amino-acid sequence, 316 residues long: Ribosomal RNA small subunit methyltransferase H (316 aa).

S-adenosyl-L-methionine-binding positions include 37–39 (GGH), Asp56, Phe83, Asp106, and His113. Residues 276 to 316 (PILPSEEETKENPASRSAKLRVLRKTKSADKKYKKENSKEE) form a disordered region. Residues 302-316 (KSADKKYKKENSKEE) show a composition bias toward basic and acidic residues.

The protein belongs to the methyltransferase superfamily. RsmH family.

The protein localises to the cytoplasm. The catalysed reaction is cytidine(1402) in 16S rRNA + S-adenosyl-L-methionine = N(4)-methylcytidine(1402) in 16S rRNA + S-adenosyl-L-homocysteine + H(+). Functionally, specifically methylates the N4 position of cytidine in position 1402 (C1402) of 16S rRNA. This Leptospira borgpetersenii serovar Hardjo-bovis (strain L550) protein is Ribosomal RNA small subunit methyltransferase H.